A 2282-amino-acid chain; its full sequence is MKGHQFKSWIFELREILREIKNSHYFLDSWTQFNSVGSFIHIFFHQERFIKLLDSRIWSILFSRNSQGSTSNRYFTIKGVVLFVVVVLIYRINNRKMVERKNLYLTGLLPIPMNSIGPRNDTLEESFGSSNINRLIVSLLYLPKGKKISESRFLDPKESTWVLPITKKCIMSESNWGSRWWRNWIGKKRDSSCKISNETVAGIEISFKEKDIKYLEFLFVYYMDDPIRKDHDWELFDRLSPRKGRNIINLNSGQLFEILVKDWICYLMFAFREKIPIEVEGFFKQQGAGSTIQSNDIEHVSHLFSRKKWAISLQNCAQFHMWQFRQDLFVSWGNNPHESDFLRNISRENWIWLDNVWLVNKDRFFSKARNISSNIQYDSTRSSFLQGRDSSQLKGSSDQSRDHFDSISNEDSEYHTLINQREIQQLKERSILWDPSFLQTERTEIESDRFPKCLSGYSSMSRLFTEGAKEMNNHLLPEEIEEFLGNPTRSIRSFFSDRWSELHLGSNPTERSTRDQKLLKKEQDVSFVPSRRSENKEIVNIFKTITYLQNTVSIHPISSDPGCDMVLKDELDMDSSNKISFLNKNPFFDLFHLFHDRNGGGYTLHHDFESEERFQEMADLFTLSITEPDLVYHKGFAFFIDSYGLDQKQFLNEVFNSRDESKKKSLLVLPPIFYEENESFYRRIRKKWVRISCGNDLEDPKQKRVVFASNNIMEAVNQYGLIRNLIQIQYSTYGYIRNVLNQFFLMNRSDRNFEYGIQKDQIGNDTLNHRTLMKYTINQHLSNLKQSQKKWFDPLIFLSRTERSMNWDPNSYRYKWSNGSNNFQEHFISEQKSRFLFQVVFDRLRINQYSIDWSEVIDKKDLSKSLPFFLSKLLLFLSKFILFLSNSLPFFFVSFGNIPIHRSEIHIYELKGPNDQLCNQLLEPIGLQIVHLKKWKPFLLDDHDTSQKSKFLINGGTISPFLFNKIPKWMIDSFHTRNNRRKSFDNTDSSFSMISHDQDNWLNPVKPFHRSSLISSFYKANRLRFLNNLHHFCFYCNKRFPFYVEKARIKNYDFTYGQFLNILFIRNKIFSLCGGKKKHAFLERDTISPIESQVSNIFIPNDFPQSGDESLYKSFHFPIRPDPFVRRAIYSIADVSGTPLTEGQIFNFERTYCQPLSDINLSDSEGKNLHQYLNFNSNMGLIHTPCSEKYLPSEKRKKRSLCLKKCVEKGQMYRTFQGDSAFSTLSKWNLFQTYMPWFLTSTGYKYLNLIFLDTFSDHLLPILSSSQKIVSIFHDIMHGSDISWRILQKNLWKTQWNLISEISSKCLHNLLLSEEMIHRNNEPPLISTRLRSPNVREFLYSILFLLLVAGYLVRTHLLFVSRAYSELQTEFEKVKSLMIPSYMIELRKLLDRYPTSELNSFWLKNLFLVALEQLGDLLEEIRGSASGGNMLWGGGPAYGVKSIRSKKKFLNINLIDLISIIPNPINRITFSRNTRHLSHTSKEIYSLIRKRKNVNGDWIDDKIESLVANSDSIDDKEREFLVQFSTLTTEKRIDQILLSLTHSDHLSKNDSGYQMIEEPGAIYLRYLVDIHKKYLMNYEFNTPCLAERRIFLAHYQTITYSQTSCGANSFHFPSHGKPFSLRLALSPSRGILVIGSIGTGRSYLVKYLATNSYVPFITVFLNKFLDNKPKGFLIDDRDDIDDSDDIDVSDDIDRDLDTELELLTRMNVLTMDMMPEIDRFYITLQFELAKAMSPCIIWIPNIHDLDVNESNYLSLGLLVNYLSRDCERCSTRNILVIASTHIPQKVDPALIAPNKLNTCIKIRRLLIPQQRKHVFTLSYSRGFHLEKKMFHTKRFGSVTMGSNVRDLVALTNEALSISITQKKSIIDTNIIRSALHRQTWDLRSQVRSVQDHGILFYQIGRAVAQNVFLSNCPIDPISIYMKKKSCNEGDSYLYKWYFELGTSMKKLTILLYLLSCSAGSIAQDLWSLPGPDEKNGITYYGLVENDSDLVHGLLEVEGALVGSSRTEKDCSQFDNDRVTLLLRPEPRSPLDMMQNGSCSILDQRFLYEKYESEFEEGEVEGILDPQQIEEDLFNHIVWAPRIWSPWGFLFDCIERPNSLGFPYWARSFRGKRIIYDEEDELQENDSEFLQSGTMQYQIRDRSSKEQGVFRISQFIWDPADPLFFLFKDQPLVSVFSHREFFADEEMSKGLLTSQTDPPTSIYKRWFIKNTQEKHFELLIHRQRWLRTKSSLSNGFFRSNTLSESYQYLSNLFLSNGRLLDQMTKALLRKRWLFPDEMKIGFM.

1635–1642 contributes to the ATP binding site; sequence GSIGTGRS.

Belongs to the Ycf2 family.

It localises to the plastid. Its subcellular location is the chloroplast stroma. Functionally, probable ATPase of unknown function. Its presence in a non-photosynthetic plant (Epifagus virginiana) and experiments in tobacco indicate that it has an essential function which is probably not related to photosynthesis. The protein is Protein Ycf2 of Populus alba (White poplar).